Consider the following 344-residue polypeptide: Centromere protein L (344 aa).

The interval 1–32 (MAGGRPAGSAIEMEGAMRTLPSSGRPSGTGWQ) is disordered. The segment covering 20-32 (LPSSGRPSGTGWQ) has biased composition (polar residues).

Belongs to the CENP-L/IML3 family. In terms of assembly, component of the CENPA-HI complex, at least composed of CENPH, CENPI, CENPK, CENPL, CENPM, CENPO and CENPP.

The protein localises to the nucleus. It is found in the chromosome. It localises to the centromere. In terms of biological role, component of the CENPA-HI complex, a centromeric complex involved in assembly of kinetochore proteins, mitotic progression and chromosome segregation. In Gallus gallus (Chicken), this protein is Centromere protein L (CENPL).